The sequence spans 105 residues: Large ribosomal subunit protein bL21 (105 aa).

This sequence belongs to the bacterial ribosomal protein bL21 family. Part of the 50S ribosomal subunit. Contacts protein L20.

This protein binds to 23S rRNA in the presence of protein L20. This is Large ribosomal subunit protein bL21 from Parabacteroides distasonis (strain ATCC 8503 / DSM 20701 / CIP 104284 / JCM 5825 / NCTC 11152).